The sequence spans 215 residues: MLMEEIMDNPLYLYDLEYKNVIGVDEAGRGPLAGPVVAAAVILKEYTEELDEINDSKKLTEKKREKLYDIIMKNFDVAVGISTVEEIDKLNILNADFLAMRRALKDLKSLKNEKEYTVLVDGNLKIKEYIGKQLPIVKGDAKSLSIAAASIIAKVTRDRLMKDLANIYPDYSFEKHKGYGTKTHIEAIKDKGAIEGVHRKVFLRKILETEEEKTK.

In terms of domain architecture, RNase H type-2 spans 19–214; that stretch reads KNVIGVDEAG…KILETEEEKT (196 aa). The a divalent metal cation site is built by Asp-25, Glu-26, and Asp-121.

This sequence belongs to the RNase HII family. Mn(2+) is required as a cofactor. It depends on Mg(2+) as a cofactor.

It is found in the cytoplasm. It carries out the reaction Endonucleolytic cleavage to 5'-phosphomonoester.. Endonuclease that specifically degrades the RNA of RNA-DNA hybrids. The chain is Ribonuclease HII from Fusobacterium nucleatum subsp. nucleatum (strain ATCC 25586 / DSM 15643 / BCRC 10681 / CIP 101130 / JCM 8532 / KCTC 2640 / LMG 13131 / VPI 4355).